We begin with the raw amino-acid sequence, 300 residues long: Ribosomal RNA small subunit methyltransferase H (300 aa).

Residues 33–35 (GGH), aspartate 53, phenylalanine 78, aspartate 97, and glutamine 104 each bind S-adenosyl-L-methionine.

This sequence belongs to the methyltransferase superfamily. RsmH family.

Its subcellular location is the cytoplasm. It catalyses the reaction cytidine(1402) in 16S rRNA + S-adenosyl-L-methionine = N(4)-methylcytidine(1402) in 16S rRNA + S-adenosyl-L-homocysteine + H(+). In terms of biological role, specifically methylates the N4 position of cytidine in position 1402 (C1402) of 16S rRNA. This is Ribosomal RNA small subunit methyltransferase H from Karelsulcia muelleri (strain GWSS) (Sulcia muelleri).